The sequence spans 277 residues: 3-methyl-2-oxobutanoate hydroxymethyltransferase (277 aa).

Residues D42 and D81 each contribute to the Mg(2+) site. 3-methyl-2-oxobutanoate is bound by residues 42 to 43, D81, and K110; that span reads DS. E112 is a Mg(2+) binding site. Catalysis depends on E179, which acts as the Proton acceptor.

Belongs to the PanB family. Homodecamer; pentamer of dimers. The cofactor is Mg(2+).

It localises to the cytoplasm. It catalyses the reaction 3-methyl-2-oxobutanoate + (6R)-5,10-methylene-5,6,7,8-tetrahydrofolate + H2O = 2-dehydropantoate + (6S)-5,6,7,8-tetrahydrofolate. Its pathway is cofactor biosynthesis; (R)-pantothenate biosynthesis; (R)-pantoate from 3-methyl-2-oxobutanoate: step 1/2. Catalyzes the reversible reaction in which hydroxymethyl group from 5,10-methylenetetrahydrofolate is transferred onto alpha-ketoisovalerate to form ketopantoate. The protein is 3-methyl-2-oxobutanoate hydroxymethyltransferase of Anaplasma marginale (strain St. Maries).